We begin with the raw amino-acid sequence, 408 residues long: LL-diaminopimelate aminotransferase (408 aa).

Substrate is bound by residues Tyr-15 and Gly-42. Pyridoxal 5'-phosphate is bound by residues Tyr-72, 108–109 (SK), Tyr-132, Asn-187, Tyr-218, and 246–248 (SFS). Substrate-binding residues include Lys-109, Tyr-132, and Asn-187. Position 249 is an N6-(pyridoxal phosphate)lysine (Lys-249). Residues Arg-257 and Asn-292 each contribute to the pyridoxal 5'-phosphate site. 2 residues coordinate substrate: Asn-292 and Arg-388.

The protein belongs to the class-I pyridoxal-phosphate-dependent aminotransferase family. LL-diaminopimelate aminotransferase subfamily. As to quaternary structure, homodimer. It depends on pyridoxal 5'-phosphate as a cofactor.

It catalyses the reaction (2S,6S)-2,6-diaminopimelate + 2-oxoglutarate = (S)-2,3,4,5-tetrahydrodipicolinate + L-glutamate + H2O + H(+). Its pathway is amino-acid biosynthesis; L-lysine biosynthesis via DAP pathway; LL-2,6-diaminopimelate from (S)-tetrahydrodipicolinate (aminotransferase route): step 1/1. In terms of biological role, involved in the synthesis of meso-diaminopimelate (m-DAP or DL-DAP), required for both lysine and peptidoglycan biosynthesis. Catalyzes the direct conversion of tetrahydrodipicolinate to LL-diaminopimelate. This is LL-diaminopimelate aminotransferase from Leptospira biflexa serovar Patoc (strain Patoc 1 / Ames).